Reading from the N-terminus, the 289-residue chain is 4-diphosphocytidyl-2-C-methyl-D-erythritol kinase (289 aa).

Lys-15 is a catalytic residue. Residue Pro-100 to Ala-110 coordinates ATP. Residue Asp-140 is part of the active site.

It belongs to the GHMP kinase family. IspE subfamily.

It carries out the reaction 4-CDP-2-C-methyl-D-erythritol + ATP = 4-CDP-2-C-methyl-D-erythritol 2-phosphate + ADP + H(+). Its pathway is isoprenoid biosynthesis; isopentenyl diphosphate biosynthesis via DXP pathway; isopentenyl diphosphate from 1-deoxy-D-xylulose 5-phosphate: step 3/6. In terms of biological role, catalyzes the phosphorylation of the position 2 hydroxy group of 4-diphosphocytidyl-2C-methyl-D-erythritol. In Anaplasma marginale (strain Florida), this protein is 4-diphosphocytidyl-2-C-methyl-D-erythritol kinase.